The chain runs to 259 residues: 4-hydroxy-tetrahydrodipicolinate reductase (259 aa).

Residues 9–14 and E35 each bind NAD(+); that span reads GAGGRM. R36 lines the NADP(+) pocket. NAD(+) contacts are provided by residues 92 to 94 and 116 to 119; these read GTT and APNM. Residue H149 is the Proton donor/acceptor of the active site. (S)-2,3,4,5-tetrahydrodipicolinate is bound at residue H150. Residue K153 is the Proton donor of the active site. Residue 159–160 coordinates (S)-2,3,4,5-tetrahydrodipicolinate; that stretch reads GT.

Belongs to the DapB family.

The protein resides in the cytoplasm. It carries out the reaction (S)-2,3,4,5-tetrahydrodipicolinate + NAD(+) + H2O = (2S,4S)-4-hydroxy-2,3,4,5-tetrahydrodipicolinate + NADH + H(+). It catalyses the reaction (S)-2,3,4,5-tetrahydrodipicolinate + NADP(+) + H2O = (2S,4S)-4-hydroxy-2,3,4,5-tetrahydrodipicolinate + NADPH + H(+). It functions in the pathway amino-acid biosynthesis; L-lysine biosynthesis via DAP pathway; (S)-tetrahydrodipicolinate from L-aspartate: step 4/4. Its function is as follows. Catalyzes the conversion of 4-hydroxy-tetrahydrodipicolinate (HTPA) to tetrahydrodipicolinate. The polypeptide is 4-hydroxy-tetrahydrodipicolinate reductase (Nitratidesulfovibrio vulgaris (strain DSM 19637 / Miyazaki F) (Desulfovibrio vulgaris)).